The following is a 699-amino-acid chain: DNA ligase (699 aa).

The segment at 1–20 is disordered; that stretch reads MTVQKPIESLSPAQAKREHR. Residues 43–47, 92–93, and Glu126 contribute to the NAD(+) site; these read DAEYD and SL. Residue Lys128 is the N6-AMP-lysine intermediate of the active site. NAD(+) is bound by residues Arg149, Glu185, Lys301, and Lys325. 4 residues coordinate Zn(2+): Cys419, Cys422, Cys443, and Cys449. Positions 621 to 699 constitute a BRCT domain; that stretch reads AKESPVAGKT…EEDWLKLVGE (79 aa).

This sequence belongs to the NAD-dependent DNA ligase family. LigA subfamily. It depends on Mg(2+) as a cofactor. Mn(2+) serves as cofactor.

It carries out the reaction NAD(+) + (deoxyribonucleotide)n-3'-hydroxyl + 5'-phospho-(deoxyribonucleotide)m = (deoxyribonucleotide)n+m + AMP + beta-nicotinamide D-nucleotide.. Functionally, DNA ligase that catalyzes the formation of phosphodiester linkages between 5'-phosphoryl and 3'-hydroxyl groups in double-stranded DNA using NAD as a coenzyme and as the energy source for the reaction. It is essential for DNA replication and repair of damaged DNA. The chain is DNA ligase from Beijerinckia indica subsp. indica (strain ATCC 9039 / DSM 1715 / NCIMB 8712).